The primary structure comprises 195 residues: SPI-2 type 3 secretion system translocon protein SctB (195 aa).

Positions 44–80 (KLMELAKKLRDIMRSYNVEKQRLAWELQVNVLQTQMK) form a coiled coil. Helical transmembrane passes span 90–110 (MITA…GAVG), 115–135 (LIAG…GAGV), and 170–190 (EIMQ…AEIL).

Belongs to the SctB/EspB family. The core secretion machinery of the T3SS is composed of approximately 20 different proteins, including cytoplasmic components, a base, an export apparatus and a needle. This subunit is involved in the formation of a pore, called the translocon, in host membrane. May form a complex with SseB and SseC/SctE2. SseB is required for correct localization of SseD/SctB2 on the bacterial cell surface. Binds to the chaperone SseA.

Its subcellular location is the secreted. The protein resides in the cell surface. It is found in the host membrane. Its function is as follows. Component of the type III secretion system 2 (SPI-2 T3SS), also called injectisome, which is used to inject bacterial effector proteins into eukaryotic host cells. SseC/SctE2 and SseD/SctB2 are inserted into the host membrane where they form a pore and allow the translocation of effector proteins into the cytosol of target cells. In terms of biological role, required for the translocation of SPI-2 effector proteins. Required for systemic Salmonella infection of the mouse. Essential for SpvB-induced actin depolymerization in the host cell cytoplasm. The polypeptide is SPI-2 type 3 secretion system translocon protein SctB (Salmonella typhimurium (strain LT2 / SGSC1412 / ATCC 700720)).